The chain runs to 105 residues: Large ribosomal subunit protein uL18c (105 aa).

This sequence belongs to the universal ribosomal protein uL18 family. In terms of assembly, part of the 50S ribosomal subunit; contacts the 5S rRNA.

Its subcellular location is the plastid. It localises to the chloroplast. Its function is as follows. Binds 5S rRNA, forms part of the central protuberance of the 50S subunit. This is Large ribosomal subunit protein uL18c (rpl18) from Gracilaria tenuistipitata var. liui (Red alga).